The following is a 160-amino-acid chain: Transcriptional repressor NrdR (160 aa).

A compositionally biased stretch (polar residues) spans 1-11; sequence MRCPNCNSLDT. A disordered region spans residues 1–20; sequence MRCPNCNSLDTQVKDSRPTE. A zinc finger lies at 3–34; that stretch reads CPNCNSLDTQVKDSRPTEDSSVIRRRRVCIAC. The ATP-cone domain maps to 49 to 139; that stretch reads LTVIKRNGRR…VYRNFREAKD (91 aa).

It belongs to the NrdR family. It depends on Zn(2+) as a cofactor.

In terms of biological role, negatively regulates transcription of bacterial ribonucleotide reductase nrd genes and operons by binding to NrdR-boxes. The protein is Transcriptional repressor NrdR of Rhodopseudomonas palustris (strain HaA2).